A 153-amino-acid chain; its full sequence is uncharacterized protein (153 aa).

Helical transmembrane passes span 1–21 and 106–126; these read MAAT…LFFS and IVPI…TVYI.

Its subcellular location is the membrane. This is an uncharacterized protein from Saccharomyces cerevisiae (strain ATCC 204508 / S288c) (Baker's yeast).